The chain runs to 427 residues: A-kinase anchor protein 5 (427 aa).

A disordered region spans residues 1–122 (METTISEIHV…DADLSKKKAK (122 aa)). The essential to the intracellular anchoring function stretch occupies residues 1–170 (METTISEIHV…LDIQTQTPLN (170 aa)). The segment covering 8 to 19 (IHVENKDEKRSA) has biased composition (basic and acidic residues). Phosphoserine is present on S22. C36 carries the S-palmitoyl cysteine lipid modification. Positions 37–48 (FKRRKKAAKALK) are enriched in basic residues. An AKAP CaM-binding motif is present at residues 76 to 96 (RGAWASLKRLVTRRKRSESSK). The span at 92–102 (SESSKQQKPLE) shows a compositional bias: basic and acidic residues. C129 is lipidated: S-palmitoyl cysteine. Composition is skewed to polar residues over residues 171–182 (DQATKAKSTQDL) and 242–252 (VQPQQASPLET). Disordered stretches follow at residues 171–205 (DQATKAKSTQDLSEGISRKDGDEVCESNVSNSTTS), 239–269 (KQDVQPQQASPLETSETDHQQPVLSDVPPLP), and 281–333 (SNST…EESK). Over residues 302 to 333 (EETKPKDTELSQESDFKENGITEEKSKSEESK) the composition is skewed to basic and acidic residues. Positions 392 to 405 (LIETASSLVKNAIQ) are PKA-RII subunit binding domain. Positions 410-427 (QLVNEMASDDNKINNLLQ) are tethers NFATC2 to CRAC channels.

As to quaternary structure, binding protein for dimer of the RII-beta regulatory subunit of cAMP-dependent protein kinase (PKA) and also for the protein kinase C (PKC) and the phosphatase calcineurin (PP2B). Each enzyme is inhibited when bound to the anchoring protein. Also binds the beta2-adrenergic receptor. Part of a complex containing AKAP5, ADCY5, ADCY6 and PDE4C. Interacts with ADCY8, and enhances its phosphorylation at lipid rafts. Interacts with ORAI1 (isoform alpha) (via N-terminus) upon store depletion and in response to LTC4. Does not interact with ORAI2 and ORAI3 paralogs. Interacts (via leucine zipper domain) with NFATC2/NFAT1. Interacts with calmodulin; the interaction is calcium-independent. Interacts with KCNQ2; the interaction may help KCNQ2 channel complex to retain calcium-bound calmodulin. Interacts with KCNK2; the channel is recruited to postsynaptic microdomains by AKAP5 where it can integrate neurotransmitter receptor signals. Part of a complex composed of AKAP5 and ADRB2. Post-translationally, palmitoylated. Palmitoylation at Cys-36 and Cys-129 play a key role in the targeting of AKAP5 to lipid rafts. Palmitoylation by ZDHHC2 is required for AKAP5 function in LTP-stimulated recycling endosome exocytosis. Predominantly in the cerebral cortex and the postsynaptic densities of the forebrain, and to a lesser extent in adrenal medulla, lung and anterior pituitary.

It localises to the postsynaptic recycling endosome membrane. The protein resides in the cell projection. Its subcellular location is the dendrite. The protein localises to the postsynaptic cell membrane. Functionally, multivalent scaffold protein that anchors the cAMP-dependent protein kinase/PKA to cytoskeletal and/or organelle-associated proteins, targeting the signal carried by cAMP to specific intracellular effectors. Association with the beta2-adrenergic receptor (beta2-AR) not only regulates beta2-AR signaling pathway, but also the activation by PKA by switching off the beta2-AR signaling cascade. Plays a role in long term synaptic potentiation by regulating protein trafficking from the dendritic recycling endosomes to the plasma membrane and controlling both structural and functional plasticity at excitatory synapses. In hippocampal pyramidal neurons, recruits KCNK2/TREK-1 channel at postsynaptic dense bodies microdomains and converts it to a leak channel no longer sensitive to stimulation by arachidonic acid, acidic pH or mechanical stress, nor inhibited by Gq-coupled receptors but still under the negative control of Gs-coupled receptors. Associates with ORAI1 pore-forming subunit of CRAC channels in Ca(2+) signaling microdomains where it recruits NFATC2/NFAT1 and couples store-operated Ca(2+) influx to calmodulin and calcineurin signaling and activation of NFAT-dependent transcriptional responses. The chain is A-kinase anchor protein 5 (AKAP5) from Homo sapiens (Human).